Reading from the N-terminus, the 196-residue chain is Probable peptidyl-prolyl cis-trans isomerase (196 aa).

An N-terminal signal peptide occupies residues 1–26; that stretch reads MSFIRSALAAAAFVALSIGAVQTASA. Residues 29 to 194 form the PPIase cyclophilin-type domain; that stretch reads PENTVILKLK…KIIKATIEAD (166 aa).

This sequence belongs to the cyclophilin-type PPIase family.

The protein resides in the periplasm. The catalysed reaction is [protein]-peptidylproline (omega=180) = [protein]-peptidylproline (omega=0). Functionally, PPIases accelerate the folding of proteins. It catalyzes the cis-trans isomerization of proline imidic peptide bonds in oligopeptides. This chain is Probable peptidyl-prolyl cis-trans isomerase (ppi), found in Brucella abortus (strain 2308).